The chain runs to 165 residues: Thiol peroxidase (165 aa).

Residues 18–164 (RKVGDKAPNF…YEAAIEAAKK (147 aa)) enclose the Thioredoxin domain. Cys60 acts as the Cysteine sulfenic acid (-SOH) intermediate in catalysis. A disulfide bridge connects residues Cys60 and Cys94.

Belongs to the peroxiredoxin family. Tpx subfamily. In terms of assembly, homodimer.

It carries out the reaction a hydroperoxide + [thioredoxin]-dithiol = an alcohol + [thioredoxin]-disulfide + H2O. In terms of biological role, thiol-specific peroxidase that catalyzes the reduction of hydrogen peroxide and organic hydroperoxides to water and alcohols, respectively. Plays a role in cell protection against oxidative stress by detoxifying peroxides. In Listeria monocytogenes serovar 1/2a (strain ATCC BAA-679 / EGD-e), this protein is Thiol peroxidase.